Here is a 34-residue protein sequence, read N- to C-terminus: NU-buthitoxin-Ptr1a (34 aa).

3 disulfides stabilise this stretch: Cys-6/Cys-27, Cys-12/Cys-32, and Cys-16/Cys-34.

In terms of tissue distribution, expressed by the venom gland.

The protein localises to the secreted. In terms of biological role, toxin that acts as an agonist on melanocortin receptors (MC1R, MC3R, MC5R, MC5R). After binding to MC1R, the peptide activates the hMC1R/Gs pathway, but after binding to MC4R, it is not able to activate or antagonize the MC4R/Gs pathway. Inhibits melanocyte stimulating hormone (MSH)-binding to human receptors (Ki=2.9 uM to MC1R, Ki=3.9 uM to MC3R, Ki=2.6 uM to MC4R, Ki=2.2 uM to MC5R). This toxin is structurally unrelated to the natural agonists. This is NU-buthitoxin-Ptr1a from Parabuthus transvaalicus (Transvaal thick-tailed scorpion).